A 371-amino-acid polypeptide reads, in one-letter code: tRNA-specific 2-thiouridylase MnmA (371 aa).

Residues 13-20 (GMSGGVDS) and methionine 39 contribute to the ATP site. Residues 99-101 (NPD) are interaction with target base in tRNA. Cysteine 104 functions as the Nucleophile in the catalytic mechanism. A disulfide bridge links cysteine 104 with cysteine 200. Glycine 128 provides a ligand contact to ATP. An interaction with tRNA region spans residues 150 to 152 (KDQ). Catalysis depends on cysteine 200, which acts as the Cysteine persulfide intermediate. An interaction with tRNA region spans residues 308–309 (RY).

This sequence belongs to the MnmA/TRMU family.

The protein resides in the cytoplasm. The catalysed reaction is S-sulfanyl-L-cysteinyl-[protein] + uridine(34) in tRNA + AH2 + ATP = 2-thiouridine(34) in tRNA + L-cysteinyl-[protein] + A + AMP + diphosphate + H(+). Functionally, catalyzes the 2-thiolation of uridine at the wobble position (U34) of tRNA, leading to the formation of s(2)U34. The sequence is that of tRNA-specific 2-thiouridylase MnmA from Bacillus mycoides (strain KBAB4) (Bacillus weihenstephanensis).